A 1161-amino-acid polypeptide reads, in one-letter code: Integrin alpha-D (1161 aa).

The N-terminal stretch at 1 to 17 is a signal peptide; the sequence is MTFGTVLLLSVLASYHG. Residues 18-1099 are Extracellular-facing; that stretch reads FNLDVEEPTI…MVLEEDEVYN (1082 aa). 2 FG-GAP repeats span residues 19 to 76 and 77 to 136; these read NLDV…MCQP and IPLH…IIQT. Asparagine 59 is a glycosylation site (N-linked (GlcNAc...) asparagine). A disulfide bridge links cysteine 67 with cysteine 74. N-linked (GlcNAc...) asparagine glycosylation is found at asparagine 87 and asparagine 99. Cysteine 106 and cysteine 124 are disulfide-bonded. The VWFA domain occupies 150-332; that stretch reads DIVFLIDGSG…SIQKQLQEKI (183 aa). FG-GAP repeat units lie at residues 339–390, 391–442, 443–503, 506–564, and 569–629; these read QSRA…PTFI, NMSQ…SRQW, RKKA…RVQW, DAVL…SGIS, and QRIA…FSPV. Asparagine 391 carries N-linked (GlcNAc...) asparagine glycosylation. Positions 465, 467, 469, 473, 529, 531, 533, 537, 592, 596, and 600 each coordinate Ca(2+). Residues cysteine 654 and cysteine 709 are joined by a disulfide bond. Residues asparagine 690 and asparagine 732 are each glycosylated (N-linked (GlcNAc...) asparagine). 2 cysteine pairs are disulfide-bonded: cysteine 768-cysteine 774 and cysteine 845-cysteine 860. Residues asparagine 872 and asparagine 956 are each glycosylated (N-linked (GlcNAc...) asparagine). Disulfide bonds link cysteine 993–cysteine 1017 and cysteine 1022–cysteine 1027. Asparagine 1045 carries an N-linked (GlcNAc...) asparagine glycan. A helical membrane pass occupies residues 1100–1120; the sequence is AIPIIMGSSVGALLLLALITA. Residues 1121–1161 lie on the Cytoplasmic side of the membrane; sequence TLYKLGFFKRHYKEMLEDKPEDTATFSGDDFSCVAPNVPLS. A GFFKR motif motif is present at residues 1126 to 1130; sequence GFFKR.

This sequence belongs to the integrin alpha chain family. In terms of assembly, heterodimer of an alpha and a beta subunit. Alpha-D associates with beta-2. As to expression, expressed moderately on myelomonocytic cell lines and subsets of peripheral blood leukocytes and strongly on tissue-specialized cells, including macrophages foam cells within atherosclerotic plaques, and on splenic red pulp macrophages.

The protein resides in the membrane. In terms of biological role, integrin alpha-D/beta-2 is a receptor for ICAM3 and VCAM1. May play a role in the atherosclerotic process such as clearing lipoproteins from plaques and in phagocytosis of blood-borne pathogens, particulate matter, and senescent erythrocytes from the blood. The chain is Integrin alpha-D (ITGAD) from Homo sapiens (Human).